The following is a 535-amino-acid chain: Arylsulfatase G (535 aa).

An N-terminal signal peptide occupies residues Met-1–Cys-18. Asp-44, Asp-45, and Cys-84 together coordinate Ca(2+). Residue Cys-84 is the Nucleophile of the active site. Cys-84 carries the post-translational modification 3-oxoalanine (Cys). Residue Asn-117 is glycosylated (N-linked (GlcNAc...) asparagine). Lys-137 lines the substrate pocket. The active site involves His-139. Residue Ser-162 participates in substrate binding. The N-linked (GlcNAc...) asparagine glycan is linked to Asn-215. His-251 contributes to the substrate binding site. The Ca(2+) site is built by Asp-302 and Asn-303. N-linked (GlcNAc...) asparagine glycans are attached at residues Asn-356 and Asn-497.

The protein belongs to the sulfatase family. Ca(2+) is required as a cofactor. N-glycosylated with both high mannose and complex type sugars. In terms of processing, the conversion to 3-oxoalanine (also known as C-formylglycine, FGly), of a serine or cysteine residue in prokaryotes and of a cysteine residue in eukaryotes, is critical for catalytic activity. Post-translationally, the 63-kDa precursor undergoes proteolytic processing in two steps, yielding two fragments in the first step (apparent molecular masses of 44 and 18 kDa). In the second step, the 44-kDa fragment is processed further to the 34- and 10-kDa chains. The 10-kDa chain is a cleavage product of the 44-kDa fragment but linked to the 18-kDa chain through a disulfide bridge.

Its subcellular location is the lysosome. The catalysed reaction is an aryl sulfate + H2O = a phenol + sulfate + H(+). The enzyme catalyses Hydrolysis of the 3-sulfate groups of the N-sulfo-D-glucosamine 3-O-sulfate units of heparin.. Displays arylsulfatase activity with pseudosubstrates at acidic pH, such as p-nitrocatechol sulfate. Catalyzes the hydrolysis of the 3-sulfate groups of the N-sulfo-D-glucosamine 3-O-sulfate units of heparin. In Canis lupus familiaris (Dog), this protein is Arylsulfatase G (ARSG).